The chain runs to 148 residues: Putative transmembrane protein ORF23 (148 aa).

Residues 1 to 18 (MVIILLGVSIVVPGLFLA) form the signal peptide. Residues 19–118 (TETPQTNTFE…YVGWPSGAET (100 aa)) are Extracellular-facing. The helical transmembrane segment at 119 to 139 (IITNIADIIIMATAVMIIGAI) threads the bilayer. Residues 140-148 (YTGYKVSIK) are Cytoplasmic-facing.

The protein localises to the host membrane. This His1 virus (isolate Australia/Victoria) (His1V) protein is Putative transmembrane protein ORF23.